A 136-amino-acid chain; its full sequence is Pterin-4-alpha-carbinolamine dehydratase 2 (136 aa).

An N6-acetyllysine; alternate mark is found at K120, K124, and K131. Residues K120, K124, and K131 each carry the N6-succinyllysine; alternate modification.

This sequence belongs to the pterin-4-alpha-carbinolamine dehydratase family. As to quaternary structure, homotetramer. Interacts with DYRK1B.

It catalyses the reaction (4aS,6R)-4a-hydroxy-L-erythro-5,6,7,8-tetrahydrobiopterin = (6R)-L-erythro-6,7-dihydrobiopterin + H2O. In terms of biological role, involved in tetrahydrobiopterin biosynthesis. Seems to both prevent the formation of 7-pterins and accelerate the formation of quinonoid-BH2. Its function is as follows. Regulates the dimerization of homeodomain protein HNF-1-alpha and enhances its transcriptional activity. The chain is Pterin-4-alpha-carbinolamine dehydratase 2 (Pcbd2) from Mus musculus (Mouse).